Reading from the N-terminus, the 113-residue chain is Mitochondrial import inner membrane translocase subunit TIM14 (113 aa).

Residues 1 to 4 (MATP) are Mitochondrial intermembrane-facing. The chain crosses the membrane as a helical span at residues 5–22 (IIVGATIAGIAYSSRFLI). Residues 23–113 (RVIQRAKSKQ…RNVLSSKNSN (91 aa)) are Mitochondrial matrix-facing. Positions 59-113 (EAANILGLKEESTKEEIKIRHKLLMIKNHPDKGGSSYLATKINEARNVLSSKNSN) constitute a J domain.

This sequence belongs to the TIM14 family. As to quaternary structure, interacts with PHB2; the interaction associates DNAJC19 with the prohibitin complex. Interacts with TIMM16/PAM16. May be a component of the PAM complex at least composed of a mitochondrial HSP70 protein, GRPEL1 or GRPEL2, TIMM44, TIMM16/PAM16 and TIMM14/DNAJC19.

It localises to the mitochondrion inner membrane. Its function is as follows. Mitochondrial co-chaperone which forms a complex with prohibitins to regulate cardiolipin remodeling. May be a component of the PAM complex, a complex required for the translocation of transit peptide-containing proteins from the inner membrane into the mitochondrial matrix in an ATP-dependent manner. May act as a co-chaperone that stimulate the ATP-dependent activity. The polypeptide is Mitochondrial import inner membrane translocase subunit TIM14 (dnajc19) (Dictyostelium discoideum (Social amoeba)).